A 600-amino-acid polypeptide reads, in one-letter code: Protein GPR107 (600 aa).

Positions 1–39 are cleaved as a signal peptide; sequence MAALAPVGSPASRGPRLAAGLRLLPMLGLLQLLAEPGLG. The Extracellular segment spans residues 40-263; sequence RVHHLALKDD…YLSAGEIPLP (224 aa). Asparagine 70 and asparagine 169 each carry an N-linked (GlcNAc...) asparagine glycan. The cysteines at positions 109 and 228 are disulfide-linked. Residues 157–175 show a composition bias toward polar residues; it reads SQEPNVNPASAGNQTQKTQ. Positions 157-185 are disordered; that stretch reads SQEPNVNPASAGNQTQKTQDGGKSKRSTV. The span at 176–185 shows a compositional bias: basic and acidic residues; that stretch reads DGGKSKRSTV. Asparagine 211 is a glycosylation site (N-linked (GlcNAc...) asparagine). The helical transmembrane segment at 264 to 284 threads the bilayer; sequence KLYISMAFFFFLSGTIWIHIL. Residues 285 to 293 lie on the Cytoplasmic side of the membrane; sequence RKRRNDVFK. A helical membrane pass occupies residues 294–314; the sequence is IHWLMAALPFTKSLSLVFHAI. Topologically, residues 315-337 are extracellular; the sequence is DYHYISSQGFPIEGWAVVYYITH. A helical membrane pass occupies residues 338–358; the sequence is LLKGALLFITIALIGTGWAFI. At 359–368 the chain is on the cytoplasmic side; sequence KHILSDKDKK. A helical membrane pass occupies residues 369–389; it reads IFMIVIPLQVLANVAYIIIES. Topologically, residues 390-402 are extracellular; that stretch reads TEEGTTEYGLWKD. The helical transmembrane segment at 403-423 threads the bilayer; sequence SLFLVDLLCCGAILFPVVWSI. Residues 424–498 lie on the Cytoplasmic side of the membrane; that stretch reads RHLQEASATD…AKLKLFRHYY (75 aa). Residues 499–519 form a helical membrane-spanning segment; sequence VLIVCYIYFTRIIAFLLKLAV. The Extracellular segment spans residues 520–524; sequence PFQWK. The helical transmembrane segment at 525-544 threads the bilayer; sequence WLYQLLDETATLVFFVLTGY. Residues 545 to 600 lie on the Cytoplasmic side of the membrane; it reads KFRPASDNPYLQLSQEEEDLEMESVVTTSGVMESMKKVKKVTNGSVEPQGEWEGAV.

The protein belongs to the LU7TM family. Cleaved by FURIN to yield two fragments of 17 and 35 kDa that remain associated via a disulfide bond.

It is found in the cell membrane. The protein resides in the golgi apparatus. It localises to the trans-Golgi network membrane. Its function is as follows. Has been proposed to act as a receptor for neuronostatin, a peptide derived from the somatostatin/SST precursor. Involved in blood sugar regulation through the induction of glucagon in response to low glucose. Functionally, (Microbial infection) Required for intoxication by Pseudomonas aeruginosa exotoxin A and Campylobacter jejuni CDT. May contribute to the retrograde transport of bacterial toxins, including cholera toxin, from the trans-Golgi network to the endoplasmic reticulum. The sequence is that of Protein GPR107 (GPR107) from Homo sapiens (Human).